The sequence spans 425 residues: Glutamate-1-semialdehyde 2,1-aminomutase (425 aa).

Lys-265 bears the N6-(pyridoxal phosphate)lysine mark.

The protein belongs to the class-III pyridoxal-phosphate-dependent aminotransferase family. HemL subfamily. As to quaternary structure, homodimer. It depends on pyridoxal 5'-phosphate as a cofactor.

It localises to the cytoplasm. The catalysed reaction is (S)-4-amino-5-oxopentanoate = 5-aminolevulinate. The protein operates within porphyrin-containing compound metabolism; protoporphyrin-IX biosynthesis; 5-aminolevulinate from L-glutamyl-tRNA(Glu): step 2/2. This chain is Glutamate-1-semialdehyde 2,1-aminomutase, found in Clostridium perfringens (strain SM101 / Type A).